Reading from the N-terminus, the 238-residue chain is Orotidine 5'-phosphate decarboxylase (238 aa).

Residues D18, K40, 67-76 (DMKLLDIDNT), T122, R183, Q192, and R213 contribute to the substrate site. K69 serves as the catalytic Proton donor.

This sequence belongs to the OMP decarboxylase family. Type 1 subfamily. In terms of assembly, homodimer.

The enzyme catalyses orotidine 5'-phosphate + H(+) = UMP + CO2. It functions in the pathway pyrimidine metabolism; UMP biosynthesis via de novo pathway; UMP from orotate: step 2/2. Catalyzes the decarboxylation of orotidine 5'-monophosphate (OMP) to uridine 5'-monophosphate (UMP). This Brucella canis (strain ATCC 23365 / NCTC 10854 / RM-666) protein is Orotidine 5'-phosphate decarboxylase.